Consider the following 216-residue polypeptide: MAQPQNVPTFKLVLVGDGGTGKTTFVKRHLTGEFEKKYIATLGVEVHPLHFHTNFGEICFNVWDTAGQEKLGGLRDGYYIQGQCGIIMFDVTSRITYKNVPHWWRDLVRVCENIPIVLCGNKVDVKERKVKAKAITFHRKKNLQYYDISAKSNYNFEKPFLWLARKLVGNPNLEFVASPALAPPEVQVDQQLLAQYQQEMNEAAAMPLPDEDDADL.

Positions 6–170 (NVPTFKLVLV…LWLARKLVGN (165 aa)) constitute a Small GTPase Ran-type domain. 17–24 (DGGTGKTT) contributes to the GTP binding site. Position 20 is a phosphothreonine (T20). The tract at residues 36-44 (KKYIATLGV) is switch-I. GTP-binding positions include G67, 121–124 (NKVD), and 149–151 (SAK). The segment at 67–83 (GQEKLGGLRDGYYIQGQ) is switch-II.

This sequence belongs to the small GTPase superfamily. Ran family. In terms of assembly, oligomer of dis3, pim1 and spi1. Found in a nuclear export complex with RanGTP, exportin and pre-miRNA. Interacts with fft3.

It localises to the nucleus. Functionally, GTP-binding protein involved in nucleocytoplasmic transport. Required for the import of protein into the nucleus and also for RNA export. This chain is GTP-binding nuclear protein spi1 (spi1), found in Schizosaccharomyces pombe (strain 972 / ATCC 24843) (Fission yeast).